The chain runs to 274 residues: Dehydration-responsive element-binding protein 2A (274 aa).

Composition is skewed to basic and acidic residues over residues 1 to 10 (MERGEGRRGD) and 35 to 50 (KWWKEQNQKLQEENSS). The disordered stretch occupies residues 1-75 (MERGEGRRGD…KGGPENSNCA (75 aa)). Positions 75-132 (AYRGVRQRTWGKWVAEIREPNRGRRLWLGSFPTALEAAHAYDEAARAMYGPTARVNFA) form a DNA-binding region, AP2/ERF.

Belongs to the AP2/ERF transcription factor family. ERF subfamily.

It localises to the nucleus. In terms of biological role, transcriptional activator that binds specifically to the DNA sequence 5'-[AG]CCGAC-3' of the cis-acting dehydration-responsive element (DRE). Binding to the C-repeat/DRE element mediates high salinity- and dehydration-inducible transcription. In Oryza sativa subsp. japonica (Rice), this protein is Dehydration-responsive element-binding protein 2A (DREB2A).